Reading from the N-terminus, the 159-residue chain is Probable minor fimbrial protein (159 aa).

Positions 1–6 are cleaved as a propeptide — leader sequence; sequence MKKMHG. Position 7 is an N-methylphenylalanine (F7). The chain crosses the membrane as a helical span at residues 7-29; the sequence is FTLIELMIVVAIIGVLASIALMQ. Intrachain disulfides connect C56–C71 and C140–C153.

Belongs to the N-Me-Phe pilin family. The pili are polar flexible filaments of about 5.4 nanometers diameter and 2.5 micrometers average length; they consist of only a single polypeptide chain arranged in a helical configuration of five subunits per turn in the assembled pilus.

It localises to the fimbrium. Its subcellular location is the membrane. The protein is Probable minor fimbrial protein (fimZ) of Dichelobacter nodosus (Bacteroides nodosus).